The primary structure comprises 185 residues: Protein P21 (185 aa).

The protein is Protein P21 of Vitis vinifera (Grape).